A 177-amino-acid polypeptide reads, in one-letter code: Adenine phosphoribosyltransferase (177 aa).

The protein belongs to the purine/pyrimidine phosphoribosyltransferase family. Homodimer.

It is found in the cytoplasm. The catalysed reaction is AMP + diphosphate = 5-phospho-alpha-D-ribose 1-diphosphate + adenine. Its pathway is purine metabolism; AMP biosynthesis via salvage pathway; AMP from adenine: step 1/1. Catalyzes a salvage reaction resulting in the formation of AMP, that is energically less costly than de novo synthesis. The chain is Adenine phosphoribosyltransferase from Idiomarina loihiensis (strain ATCC BAA-735 / DSM 15497 / L2-TR).